We begin with the raw amino-acid sequence, 360 residues long: Peptide chain release factor 1 (360 aa).

Residue Gln237 is modified to N5-methylglutamine.

The protein belongs to the prokaryotic/mitochondrial release factor family. In terms of processing, methylated by PrmC. Methylation increases the termination efficiency of RF1.

The protein localises to the cytoplasm. Functionally, peptide chain release factor 1 directs the termination of translation in response to the peptide chain termination codons UAG and UAA. The protein is Peptide chain release factor 1 of Pseudomonas fluorescens (strain ATCC BAA-477 / NRRL B-23932 / Pf-5).